The primary structure comprises 108 residues: Ribonuclease P protein component (108 aa).

Belongs to the RnpA family. Consists of a catalytic RNA component (M1 or rnpB) and a protein subunit.

The catalysed reaction is Endonucleolytic cleavage of RNA, removing 5'-extranucleotides from tRNA precursor.. Its function is as follows. RNaseP catalyzes the removal of the 5'-leader sequence from pre-tRNA to produce the mature 5'-terminus. It can also cleave other RNA substrates such as 4.5S RNA. The protein component plays an auxiliary but essential role in vivo by binding to the 5'-leader sequence and broadening the substrate specificity of the ribozyme. The sequence is that of Ribonuclease P protein component from Campylobacter jejuni subsp. doylei (strain ATCC BAA-1458 / RM4099 / 269.97).